Reading from the N-terminus, the 180-residue chain is Interleukin-17B (180 aa).

Residues 1-20 (MDWPHNLLFLLTISIFLGLG) form the signal peptide. The disordered stretch occupies residues 22 to 44 (PRSPKSKRKGQGRPGPLAPGPHQ). Asn75 is a glycosylation site (N-linked (GlcNAc...) asparagine). Disulfide bonds link Cys121–Cys176 and Cys126–Cys178.

It belongs to the IL-17 family. As to expression, expressed in adult pancreas, small intestine, stomach, spinal cord and testis. Less pronounced expression in prostate, colon mucosal lining, and ovary.

It localises to the secreted. Stimulates the release of tumor necrosis factor alpha and IL-1-beta from the monocytic cell line THP-1. This Homo sapiens (Human) protein is Interleukin-17B (IL17B).